Consider the following 257-residue polypeptide: Imidazole glycerol phosphate synthase subunit HisF (257 aa).

Catalysis depends on residues aspartate 11 and aspartate 130.

Belongs to the HisA/HisF family. In terms of assembly, heterodimer of HisH and HisF.

The protein localises to the cytoplasm. The enzyme catalyses 5-[(5-phospho-1-deoxy-D-ribulos-1-ylimino)methylamino]-1-(5-phospho-beta-D-ribosyl)imidazole-4-carboxamide + L-glutamine = D-erythro-1-(imidazol-4-yl)glycerol 3-phosphate + 5-amino-1-(5-phospho-beta-D-ribosyl)imidazole-4-carboxamide + L-glutamate + H(+). It participates in amino-acid biosynthesis; L-histidine biosynthesis; L-histidine from 5-phospho-alpha-D-ribose 1-diphosphate: step 5/9. In terms of biological role, IGPS catalyzes the conversion of PRFAR and glutamine to IGP, AICAR and glutamate. The HisF subunit catalyzes the cyclization activity that produces IGP and AICAR from PRFAR using the ammonia provided by the HisH subunit. The protein is Imidazole glycerol phosphate synthase subunit HisF of Aliivibrio fischeri (strain MJ11) (Vibrio fischeri).